The chain runs to 297 residues: MSSAHFNRGPAYGLSAEVKNKLAQKYDHQREQELREWIEGVTGRRIGNNFMDGLKDGIILCEFINKLQPGSVKKVNESTQNWHQLENIGNFIKAITKYGVKPHDIFEANDLFENTNHTQVQSTLLALASMAKTKGNKVNVGVKYAEKQERRFEPEKLREGRNIIGLQMGTNKFASQQGMTAYGTRRHLYDPKLGTDQPLDQATISLQMGTNKGASQAGMTAPGTKRQIFEPGLGMEHCDTLNVSLQMGSNKGASQRGMTVYGLPRQVYDPKYCLTPEYPELGEPAHNHHPHNYYNSA.

Residues 28–131 enclose the Calponin-homology (CH) domain; the sequence is HQREQELREW…STLLALASMA (104 aa). 3 Calponin-like repeats span residues 164 to 189, 204 to 229, and 243 to 268; these read IGLQMGTNKFASQQGMTAYGTRRHLY, ISLQMGTNKGASQAGMTAPGTKRQIF, and VSLQMGSNKGASQRGMTVYGLPRQVY. Position 170 is a phosphothreonine; by ROCK2 (Thr170). Residue Ser175 is modified to Phosphoserine; by ROCK2. 2 positions are modified to phosphothreonine; by ROCK2: Thr180 and Thr184. At Thr259 the chain carries Phosphothreonine; by ROCK2.

This sequence belongs to the calponin family.

Its function is as follows. Thin filament-associated protein that is implicated in the regulation and modulation of smooth muscle contraction. It is capable of binding to actin, calmodulin and tropomyosin. The interaction of calponin with actin inhibits the actomyosin Mg-ATPase activity. The sequence is that of Calponin-1 (CNN1) from Bos taurus (Bovine).